Consider the following 141-residue polypeptide: Nucleoside triphosphatase NudI (141 aa).

In terms of domain architecture, Nudix hydrolase spans 1-141 (MRQRTIVCPL…RVTLSQKGLL (141 aa)). The Nudix box motif lies at 38–59 (GGVEPVERIEEALRREIREELG).

It belongs to the Nudix hydrolase family. NudI subfamily. In terms of assembly, monomer. The cofactor is Mg(2+).

It carries out the reaction a ribonucleoside 5'-triphosphate + H2O = a ribonucleoside 5'-phosphate + diphosphate + H(+). The enzyme catalyses a 2'-deoxyribonucleoside 5'-triphosphate + H2O = a 2'-deoxyribonucleoside 5'-phosphate + diphosphate + H(+). The catalysed reaction is dUTP + H2O = dUMP + diphosphate + H(+). It catalyses the reaction dTTP + H2O = dTMP + diphosphate + H(+). It carries out the reaction dCTP + H2O = dCMP + diphosphate + H(+). In terms of biological role, catalyzes the hydrolysis of nucleoside triphosphates, with a preference for pyrimidine deoxynucleoside triphosphates (dUTP, dTTP and dCTP). The polypeptide is Nucleoside triphosphatase NudI (Klebsiella pneumoniae (strain 342)).